The primary structure comprises 465 residues: Cysteine--tRNA ligase (465 aa).

Cys-27 contributes to the Zn(2+) binding site. Residues 29–39 (PTVYNYIHIGN) carry the 'HIGH' region motif. Zn(2+) is bound by residues Cys-207, His-232, and Glu-236. Residues 264–268 (KMSKS) carry the 'KMSKS' region motif. Lys-267 is an ATP binding site.

This sequence belongs to the class-I aminoacyl-tRNA synthetase family. Monomer. Zn(2+) serves as cofactor.

It localises to the cytoplasm. The catalysed reaction is tRNA(Cys) + L-cysteine + ATP = L-cysteinyl-tRNA(Cys) + AMP + diphosphate. This Clostridioides difficile (strain 630) (Peptoclostridium difficile) protein is Cysteine--tRNA ligase.